The primary structure comprises 153 residues: Aspartate carbamoyltransferase regulatory chain (153 aa).

Positions 109, 114, 138, and 141 each coordinate Zn(2+).

The protein belongs to the PyrI family. In terms of assembly, contains catalytic and regulatory chains. Requires Zn(2+) as cofactor.

Involved in allosteric regulation of aspartate carbamoyltransferase. The chain is Aspartate carbamoyltransferase regulatory chain from Salmonella arizonae (strain ATCC BAA-731 / CDC346-86 / RSK2980).